The primary structure comprises 283 residues: Bifunctional protein FolD (283 aa).

NADP(+) contacts are provided by residues 164–166 (GRS), Ser-189, and Ile-230.

This sequence belongs to the tetrahydrofolate dehydrogenase/cyclohydrolase family. In terms of assembly, homodimer.

It carries out the reaction (6R)-5,10-methylene-5,6,7,8-tetrahydrofolate + NADP(+) = (6R)-5,10-methenyltetrahydrofolate + NADPH. The enzyme catalyses (6R)-5,10-methenyltetrahydrofolate + H2O = (6R)-10-formyltetrahydrofolate + H(+). It participates in one-carbon metabolism; tetrahydrofolate interconversion. Catalyzes the oxidation of 5,10-methylenetetrahydrofolate to 5,10-methenyltetrahydrofolate and then the hydrolysis of 5,10-methenyltetrahydrofolate to 10-formyltetrahydrofolate. The sequence is that of Bifunctional protein FolD from Pelobacter propionicus (strain DSM 2379 / NBRC 103807 / OttBd1).